Here is a 495-residue protein sequence, read N- to C-terminus: Cornulin (495 aa).

The EF-hand domain occupies 49 to 84 (HDPATVDEVLRLLDEDHTGTVEFKEFLVLVFKVAQA). Ca(2+) is bound by residues aspartate 62, aspartate 64, threonine 66, threonine 68, and glutamate 73. 2 disordered regions span residues 96-439 (ACGS…TVVG) and 460-481 (LHTSVSSAQGQDAAQSEEKRGI). Positions 99–110 (SQESGSLHSGAS) are enriched in polar residues. A compositionally biased stretch (low complexity) spans 137-151 (HRQSQQGSRGQNRPG). Residues 152-194 (VQTQGQATGSAWVSSYDRQAESQSQERISPQIQLSGQTEQTQK) show a composition bias toward polar residues. Over residues 196–222 (GEGKRNQTTEMRPERQPQTREQDRAHQ) the composition is skewed to basic and acidic residues. Over residues 226 to 242 (TVTGSGTQTQAGATQTV) the composition is skewed to low complexity. Composition is skewed to polar residues over residues 243–282 (EQDSSHQTGRTSKQTQEATNDQNRGTETHGQGRSQTSQAV) and 290–303 (QAGTHTQTPTQTVE). The span at 307–324 (SHQTGSTSTQTQESTNGQ) shows a compositional bias: low complexity. Residues 334–355 (GRSQTSQAVTGGHTQIQAGSHT) show a composition bias toward polar residues. Positions 374-385 (QGQTQTQPGSGQ) are enriched in low complexity. 2 stretches are compositionally biased toward polar residues: residues 403-420 (QAQTGASTESGRQEWSST) and 460-473 (LHTSVSSAQGQDAA).

Belongs to the S100-fused protein family. As to quaternary structure, homodimer. As to expression, expressed in the basal skin layer (at protein level). Squamous epithelia cell-specific. Expressed in the esophagus (periphery of the cells of the granular and the upper spinous layers), foreskin (granular and lower cornified cells), scalp skin (granular layer), inner root sheath of the hair follicle and in primary keratinocytes (at protein level). Expressed in the squamous epithelium of the cervix, esophagus, foreskin and larynx. Expressed in the fetal bladder and scalp skin. Expressed at very low levels in the lung, kidney, uterus, skeletal muscle, heart and fetal brain. Undetectable or barely detectable in esophageal and oral squamous cell carcinoma compared with the matched adjacent normal esophageal mucosa. Undetectable or barely detectable in larynx and esophagus from patients with pH-documented laryngopharyngeal reflux (LPR).

It localises to the cytoplasm. Functionally, promotes cell proliferation, G1/S cell cycle progression and induces expression of the cell cycle regulator CCND1. Regulates proliferation induced by pro-inflammatory cytokine response via activation of NFKB1 and PI3K/AKT signaling pathways. The protein is Cornulin (CRNN) of Homo sapiens (Human).